The chain runs to 218 residues: LexA repressor (218 aa).

Residues 28–48 (RAEIAAEFGFSSPNAAEEHLR) constitute a DNA-binding region (H-T-H motif). Active-site for autocatalytic cleavage activity residues include Ser136 and Lys173.

It belongs to the peptidase S24 family. As to quaternary structure, homodimer.

It carries out the reaction Hydrolysis of Ala-|-Gly bond in repressor LexA.. Functionally, represses a number of genes involved in the response to DNA damage (SOS response), including recA and lexA. In the presence of single-stranded DNA, RecA interacts with LexA causing an autocatalytic cleavage which disrupts the DNA-binding part of LexA, leading to derepression of the SOS regulon and eventually DNA repair. The polypeptide is LexA repressor (Cupriavidus pinatubonensis (strain JMP 134 / LMG 1197) (Cupriavidus necator (strain JMP 134))).